We begin with the raw amino-acid sequence, 138 residues long: MPRHHQRGSTASGGSQRQLRVAETVRHAVADILSQGSAHDPDLEGHIITVPEVRMSPDLKLATIYIMPLGGRDTEIVLAALERNKKFLRGEIAHRVNLKFAPDIRFRADERFDEAERIEKLLRTPAVQRDLNSDSEES.

The protein belongs to the RbfA family. As to quaternary structure, monomer. Binds 30S ribosomal subunits, but not 50S ribosomal subunits or 70S ribosomes.

Its subcellular location is the cytoplasm. One of several proteins that assist in the late maturation steps of the functional core of the 30S ribosomal subunit. Associates with free 30S ribosomal subunits (but not with 30S subunits that are part of 70S ribosomes or polysomes). Required for efficient processing of 16S rRNA. May interact with the 5'-terminal helix region of 16S rRNA. This Bradyrhizobium sp. (strain BTAi1 / ATCC BAA-1182) protein is Ribosome-binding factor A.